Consider the following 264-residue polypeptide: Glutamate racemase (264 aa).

Residues 10–11 (DS) and 42–43 (YG) contribute to the substrate site. Cys73 (proton donor/acceptor) is an active-site residue. 74 to 75 (NT) lines the substrate pocket. Cys181 acts as the Proton donor/acceptor in catalysis. 182–183 (TH) contacts substrate.

The protein belongs to the aspartate/glutamate racemases family.

The catalysed reaction is L-glutamate = D-glutamate. Its pathway is cell wall biogenesis; peptidoglycan biosynthesis. Functionally, provides the (R)-glutamate required for cell wall biosynthesis. The polypeptide is Glutamate racemase (Thermoanaerobacter sp. (strain X514)).